A 332-amino-acid polypeptide reads, in one-letter code: FAD-dependent monooxygenase elcE (332 aa).

It belongs to the oxygen-dependent FAD-linked oxidoreductase family.

The protein operates within secondary metabolite biosynthesis. In terms of biological role, FAD-dependent monooxygenase; part of the gene cluster that mediates the biosynthesis of elsinochrome C, a perelyenequinone phytotoxin structurally similar to cercosporin. The first step of elsinochrome C biosynthesis is performed by the polyketide synthase elcA which catalyzes the formation of nor-toralactone. The starter unit acyltransferase (SAT) domain of elcA initiates polyketide extension by the selective utilization of acetyl-CoA, which is elongated to the heptaketide in the beta-ketoacyl synthase (KS) domain by successive condensations with six malonyl units introduced by the malonyl acyltransferase (MAT) domain. The product template (PT) domain catalyzes C4-C9 and C2-C11 aldol cyclizations and dehydrations to a trihydroxynaphthalene, which is thought to be delivered to the thioesterase (TE) domain for product release. The bifunctional enzyme elcB then methylates nor-toralactone to toralactone before conducting an unusual oxidative aromatic ring opening. The next step in perylenequinone biosynthesis is an O-methylation at the nascent OH-6 of the elcB product performed by the O-methyltransferase elcD. The oxidative coupling of the two monomeric naphthol units in perylenequinone biosynthesis is catalyzed by the FAD-dependent monooxygenase elcE and the multicopper oxidase elcG. ElcG might catalyze the first intermolecular coupling in a regio- and stereo-selective manner via a phenol radical coupling mechanism and the elcE could forge the second C-C bond intramolecularly via a hydride transfer mechanism. The fasciclin domain-containing protein elcF might also play a role duting this step. The last piece of the puzzle in the biosynthesis of elsinochrome C is the additional annulation by enolate coupling to afford the dihydrobenzo(ghi)perylenequinone system, catalyzed by the FAD-dependent monooxygenase elcH. This chain is FAD-dependent monooxygenase elcE, found in Phaeosphaeria nodorum (strain SN15 / ATCC MYA-4574 / FGSC 10173) (Glume blotch fungus).